An 880-amino-acid chain; its full sequence is Valine--tRNA ligase (880 aa).

The 'HIGH' region signature appears at 49–59 (PNVTGRLHLGH). The short motif at 525-529 (KMSKS) is the 'KMSKS' region element. Residue Lys528 participates in ATP binding. Residues 809-879 (LEGLINIDEE…AVQKRMAELK (71 aa)) are a coiled coil.

This sequence belongs to the class-I aminoacyl-tRNA synthetase family. ValS type 1 subfamily. Monomer.

Its subcellular location is the cytoplasm. It catalyses the reaction tRNA(Val) + L-valine + ATP = L-valyl-tRNA(Val) + AMP + diphosphate. Its function is as follows. As ValRS can inadvertently accommodate and process structurally similar amino acids such as threonine, to avoid such errors, it has a 'posttransfer' editing activity that hydrolyzes mischarged Thr-tRNA(Val) in a tRNA-dependent manner. Catalyzes the attachment of valine to tRNA(Val). This Bacillus subtilis (strain 168) protein is Valine--tRNA ligase.